The sequence spans 750 residues: Photosystem I P700 chlorophyll a apoprotein A1 (750 aa).

A run of 8 helical transmembrane segments spans residues 70–93, 156–179, 195–219, 291–309, 346–369, 385–411, 433–455, and 531–549; these read VFSAHFGQLSIIFLWLSGMYFHGA, LYCTAIGALVFAALMLFAGWFHYH, LNHHLAGLLGLGSLSWAGHQVHVSL, IAHHHLAIAILFLVAGHMY, WHAQLSLNLAMLGSLTIVVAHHMY, LSLFTHHMWIGGFLIVGAAAHAAIFMV, AIISHLNWVCIFLGFHSFGLYIH, and FLVHHIHAFTIHVTVLILL. Positions 573 and 582 each coordinate [4Fe-4S] cluster. The next 2 helical transmembrane spans lie at 589-610 and 664-686; these read HVFLGLFWMYNSISVVIFHFSW and LSAYGLFFLGAHFVWAFSLMFLF. H675 is a binding site for chlorophyll a'. Residues M683 and Y691 each contribute to the chlorophyll a site. W692 contributes to the phylloquinone binding site. The helical transmembrane segment at 724–744 threads the bilayer; the sequence is AVGVTHYLLGGIATTWAFFLA.

It belongs to the PsaA/PsaB family. The PsaA/B heterodimer binds the P700 chlorophyll special pair and subsequent electron acceptors. PSI consists of a core antenna complex that captures photons, and an electron transfer chain that converts photonic excitation into a charge separation. The eukaryotic PSI reaction center is composed of at least 11 subunits. The cofactor is P700 is a chlorophyll a/chlorophyll a' dimer, A0 is one or more chlorophyll a, A1 is one or both phylloquinones and FX is a shared 4Fe-4S iron-sulfur center..

The protein resides in the plastid. Its subcellular location is the chloroplast thylakoid membrane. It carries out the reaction reduced [plastocyanin] + hnu + oxidized [2Fe-2S]-[ferredoxin] = oxidized [plastocyanin] + reduced [2Fe-2S]-[ferredoxin]. Its function is as follows. PsaA and PsaB bind P700, the primary electron donor of photosystem I (PSI), as well as the electron acceptors A0, A1 and FX. PSI is a plastocyanin-ferredoxin oxidoreductase, converting photonic excitation into a charge separation, which transfers an electron from the donor P700 chlorophyll pair to the spectroscopically characterized acceptors A0, A1, FX, FA and FB in turn. Oxidized P700 is reduced on the lumenal side of the thylakoid membrane by plastocyanin. This Morus indica (Mulberry) protein is Photosystem I P700 chlorophyll a apoprotein A1.